A 42-amino-acid chain; its full sequence is Photosystem II reaction center protein J (42 aa).

The chain crosses the membrane as a helical span at residues 10–30; sequence IPLWLVLTIIGLAAIALLALF.

Belongs to the PsbJ family. In terms of assembly, PSII is composed of 1 copy each of membrane proteins PsbA, PsbB, PsbC, PsbD, PsbE, PsbF, PsbH, PsbI, PsbJ, PsbK, PsbL, PsbM, PsbT, PsbY, PsbZ, Psb30/Ycf12, at least 3 peripheral proteins of the oxygen-evolving complex and a large number of cofactors. It forms dimeric complexes.

The protein localises to the plastid. It localises to the chloroplast thylakoid membrane. Its function is as follows. This protein is a component of the reaction center of photosystem II. In terms of biological role, one of the components of the core complex of photosystem II (PSII). PSII is a light-driven water:plastoquinone oxidoreductase that uses light energy to abstract electrons from H(2)O, generating O(2) and a proton gradient subsequently used for ATP formation. It consists of a core antenna complex that captures photons, and an electron transfer chain that converts photonic excitation into a charge separation. This chain is Photosystem II reaction center protein J, found in Euglena gracilis.